Here is a 201-residue protein sequence, read N- to C-terminus: Small ribosomal subunit protein uS4 (201 aa).

The tract at residues 20 to 46 (SGTGKELSRRPYAPGQHGQDRRGSLSE) is disordered. In terms of domain architecture, S4 RNA-binding spans 93 to 156 (RRLDNVVYRL…KDLQIVKEAL (64 aa)).

This sequence belongs to the universal ribosomal protein uS4 family. Part of the 30S ribosomal subunit. Contacts protein S5. The interaction surface between S4 and S5 is involved in control of translational fidelity.

In terms of biological role, one of the primary rRNA binding proteins, it binds directly to 16S rRNA where it nucleates assembly of the body of the 30S subunit. With S5 and S12 plays an important role in translational accuracy. This Ligilactobacillus salivarius (strain UCC118) (Lactobacillus salivarius) protein is Small ribosomal subunit protein uS4.